Consider the following 215-residue polypeptide: Phosphatidylserine decarboxylase proenzyme (215 aa).

S185 acts as the Schiff-base intermediate with substrate; via pyruvic acid in catalysis. S185 carries the post-translational modification Pyruvic acid (Ser); by autocatalysis.

Belongs to the phosphatidylserine decarboxylase family. PSD-A subfamily. In terms of assembly, heterodimer of a large membrane-associated beta subunit and a small pyruvoyl-containing alpha subunit. Requires pyruvate as cofactor. Post-translationally, is synthesized initially as an inactive proenzyme. Formation of the active enzyme involves a self-maturation process in which the active site pyruvoyl group is generated from an internal serine residue via an autocatalytic post-translational modification. Two non-identical subunits are generated from the proenzyme in this reaction, and the pyruvate is formed at the N-terminus of the alpha chain, which is derived from the carboxyl end of the proenzyme. The post-translation cleavage follows an unusual pathway, termed non-hydrolytic serinolysis, in which the side chain hydroxyl group of the serine supplies its oxygen atom to form the C-terminus of the beta chain, while the remainder of the serine residue undergoes an oxidative deamination to produce ammonia and the pyruvoyl prosthetic group on the alpha chain.

Its subcellular location is the cell membrane. It catalyses the reaction a 1,2-diacyl-sn-glycero-3-phospho-L-serine + H(+) = a 1,2-diacyl-sn-glycero-3-phosphoethanolamine + CO2. It functions in the pathway phospholipid metabolism; phosphatidylethanolamine biosynthesis; phosphatidylethanolamine from CDP-diacylglycerol: step 2/2. Functionally, catalyzes the formation of phosphatidylethanolamine (PtdEtn) from phosphatidylserine (PtdSer). The chain is Phosphatidylserine decarboxylase proenzyme from Streptomyces avermitilis (strain ATCC 31267 / DSM 46492 / JCM 5070 / NBRC 14893 / NCIMB 12804 / NRRL 8165 / MA-4680).